We begin with the raw amino-acid sequence, 345 residues long: Biotin synthase (345 aa).

The Radical SAM core domain occupies Pro66–Arg291. [4Fe-4S] cluster is bound by residues Cys81, Cys85, and Cys88. [2Fe-2S] cluster-binding residues include Cys124, Cys157, Cys216, and Arg286.

This sequence belongs to the radical SAM superfamily. Biotin synthase family. Homodimer. Requires [4Fe-4S] cluster as cofactor. [2Fe-2S] cluster serves as cofactor.

It carries out the reaction (4R,5S)-dethiobiotin + (sulfur carrier)-SH + 2 reduced [2Fe-2S]-[ferredoxin] + 2 S-adenosyl-L-methionine = (sulfur carrier)-H + biotin + 2 5'-deoxyadenosine + 2 L-methionine + 2 oxidized [2Fe-2S]-[ferredoxin]. It participates in cofactor biosynthesis; biotin biosynthesis; biotin from 7,8-diaminononanoate: step 2/2. Catalyzes the conversion of dethiobiotin (DTB) to biotin by the insertion of a sulfur atom into dethiobiotin via a radical-based mechanism. This Mycobacterium leprae (strain Br4923) protein is Biotin synthase.